The primary structure comprises 156 residues: ATP synthase subunit b (156 aa).

Residues 7 to 29 (LFGQTVAFILFVWFCMKFVWPPL) form a helical membrane-spanning segment.

This sequence belongs to the ATPase B chain family. In terms of assembly, F-type ATPases have 2 components, F(1) - the catalytic core - and F(0) - the membrane proton channel. F(1) has five subunits: alpha(3), beta(3), gamma(1), delta(1), epsilon(1). F(0) has three main subunits: a(1), b(2) and c(10-14). The alpha and beta chains form an alternating ring which encloses part of the gamma chain. F(1) is attached to F(0) by a central stalk formed by the gamma and epsilon chains, while a peripheral stalk is formed by the delta and b chains.

The protein resides in the cell inner membrane. In terms of biological role, f(1)F(0) ATP synthase produces ATP from ADP in the presence of a proton or sodium gradient. F-type ATPases consist of two structural domains, F(1) containing the extramembraneous catalytic core and F(0) containing the membrane proton channel, linked together by a central stalk and a peripheral stalk. During catalysis, ATP synthesis in the catalytic domain of F(1) is coupled via a rotary mechanism of the central stalk subunits to proton translocation. Component of the F(0) channel, it forms part of the peripheral stalk, linking F(1) to F(0). This chain is ATP synthase subunit b, found in Shewanella frigidimarina (strain NCIMB 400).